We begin with the raw amino-acid sequence, 183 residues long: Pentapeptide repeat protein MfpA (183 aa).

The Pentapeptide repeat domain occupies 113–147; it reads SLVDTDLRKCVLRGADLSGARTTGARLDDADLRGA.

It belongs to the pentapeptide repeat protein family. As to quaternary structure, homodimer. Probably interacts with DNA gyrase.

Its function is as follows. Might be involved in fluoroquinolone resistance. Inhibits ATP-independent DNA relaxation, ATP-dependent DNA supercoiling and ATP-dependent decatenation by endogenous gyrase, 50% inhibition occurs at 2 uM; inhibition is abolished if GyrA is mutated (Asp-87 to Gly or His). Also inhibits fluoroquinolone-promoted dsDNA cleavage. Increases fluoroquinolone (ciprofloxacin or moxifloxacin) inhibition of gyrase supercoiling activity in a concentration-dependent manner. Inhibits DNA relaxation and supercoiling by E.coli gyrase. Forms a structure that exhibits size, shape and electrostatic similarity to B-form DNA; it may bind to DNA gyrase which is postulated to protect it from fluoroquinolones. This is Pentapeptide repeat protein MfpA from Mycobacterium tuberculosis (strain ATCC 25618 / H37Rv).